Here is a 197-residue protein sequence, read N- to C-terminus: uncharacterized protein (197 aa).

An N-terminal signal peptide occupies residues 1 to 30; the sequence is MSTYIIINIALLIAIVALIFFLSKKTKSEA.

This is an uncharacterized protein from Acanthamoeba polyphaga (Amoeba).